The primary structure comprises 164 residues: MIKAVYPGSFDPVTNGHIDIIQRGAKIYDEIIVLVAENISKKPLFSLEERLDMLEHSLKDIPNVRIDHFSGLLVDYLRKINVKIIIRGLRAVSDFEYEFQQALTNKKLYPDCETVFLVSDLKYTFLSSSVVKEIASFGGCIKGLVPDYVAEKLYEKFGVKPKGV.

S9 contacts substrate. Residues 9-10 and H17 each bind ATP; that span reads SF. The substrate site is built by K41, L73, and R87. ATP contacts are provided by residues 88-90, E98, and 123-129; these read GLR and YTFLSSS.

This sequence belongs to the bacterial CoaD family. In terms of assembly, homohexamer. Requires Mg(2+) as cofactor.

The protein localises to the cytoplasm. The catalysed reaction is (R)-4'-phosphopantetheine + ATP + H(+) = 3'-dephospho-CoA + diphosphate. It functions in the pathway cofactor biosynthesis; coenzyme A biosynthesis; CoA from (R)-pantothenate: step 4/5. Functionally, reversibly transfers an adenylyl group from ATP to 4'-phosphopantetheine, yielding dephospho-CoA (dPCoA) and pyrophosphate. The protein is Phosphopantetheine adenylyltransferase of Dictyoglomus thermophilum (strain ATCC 35947 / DSM 3960 / H-6-12).